We begin with the raw amino-acid sequence, 379 residues long: Succinyl-diaminopimelate desuccinylase (379 aa).

Residue His-70 participates in Zn(2+) binding. Asp-72 is a catalytic residue. Asp-103 contacts Zn(2+). Catalysis depends on Glu-137, which acts as the Proton acceptor. Zn(2+) is bound by residues Glu-138, Glu-166, and His-352.

The protein belongs to the peptidase M20A family. DapE subfamily. As to quaternary structure, homodimer. Zn(2+) is required as a cofactor. It depends on Co(2+) as a cofactor.

The enzyme catalyses N-succinyl-(2S,6S)-2,6-diaminopimelate + H2O = (2S,6S)-2,6-diaminopimelate + succinate. It participates in amino-acid biosynthesis; L-lysine biosynthesis via DAP pathway; LL-2,6-diaminopimelate from (S)-tetrahydrodipicolinate (succinylase route): step 3/3. Its function is as follows. Catalyzes the hydrolysis of N-succinyl-L,L-diaminopimelic acid (SDAP), forming succinate and LL-2,6-diaminopimelate (DAP), an intermediate involved in the bacterial biosynthesis of lysine and meso-diaminopimelic acid, an essential component of bacterial cell walls. This Shewanella baltica (strain OS155 / ATCC BAA-1091) protein is Succinyl-diaminopimelate desuccinylase.